A 37-amino-acid polypeptide reads, in one-letter code: Cytochrome b6-f complex subunit 5 (37 aa).

A helical membrane pass occupies residues 5–25; that stretch reads LLCGIVLGLIPVTLLGLFVAA.

This sequence belongs to the PetG family. In terms of assembly, the 4 large subunits of the cytochrome b6-f complex are cytochrome b6, subunit IV (17 kDa polypeptide, PetD), cytochrome f and the Rieske protein, while the 4 small subunits are PetG, PetL, PetM and PetN. The complex functions as a dimer.

It localises to the cellular thylakoid membrane. Its function is as follows. Component of the cytochrome b6-f complex, which mediates electron transfer between photosystem II (PSII) and photosystem I (PSI), cyclic electron flow around PSI, and state transitions. PetG is required for either the stability or assembly of the cytochrome b6-f complex. The chain is Cytochrome b6-f complex subunit 5 from Synechococcus sp. (strain WH7803).